Here is a 340-residue protein sequence, read N- to C-terminus: DNA-directed RNA polymerase subunit alpha (340 aa).

The segment at 1 to 233 is alpha N-terminal domain (alpha-NTD); the sequence is MIQDEIKVST…DLFIPLINSE (233 aa). The segment at 265-340 is alpha C-terminal domain (alpha-CTD); the sequence is TKDVAFKHIF…IQLPKNKNYL (76 aa).

The protein belongs to the RNA polymerase alpha chain family. As to quaternary structure, in plastids the minimal PEP RNA polymerase catalytic core is composed of four subunits: alpha, beta, beta', and beta''. When a (nuclear-encoded) sigma factor is associated with the core the holoenzyme is formed, which can initiate transcription.

Its subcellular location is the plastid. It localises to the chloroplast. It carries out the reaction RNA(n) + a ribonucleoside 5'-triphosphate = RNA(n+1) + diphosphate. DNA-dependent RNA polymerase catalyzes the transcription of DNA into RNA using the four ribonucleoside triphosphates as substrates. The protein is DNA-directed RNA polymerase subunit alpha of Marchantia polymorpha (Common liverwort).